The primary structure comprises 404 residues: S-adenosylmethionine synthase (404 aa).

141 to 146 (GQGSVD) contributes to the ATP binding site.

This sequence belongs to the AdoMet synthase 2 family. The cofactor is Mg(2+).

The catalysed reaction is L-methionine + ATP + H2O = S-adenosyl-L-methionine + phosphate + diphosphate. It functions in the pathway amino-acid biosynthesis; S-adenosyl-L-methionine biosynthesis; S-adenosyl-L-methionine from L-methionine: step 1/1. Functionally, catalyzes the formation of S-adenosylmethionine from methionine and ATP. The chain is S-adenosylmethionine synthase from Methanococcus vannielii (strain ATCC 35089 / DSM 1224 / JCM 13029 / OCM 148 / SB).